The chain runs to 100 residues: Urease subunit gamma (100 aa).

This sequence belongs to the urease gamma subunit family. Heterotrimer of UreA (gamma), UreB (beta) and UreC (alpha) subunits. Three heterotrimers associate to form the active enzyme.

It localises to the cytoplasm. The enzyme catalyses urea + 2 H2O + H(+) = hydrogencarbonate + 2 NH4(+). It functions in the pathway nitrogen metabolism; urea degradation; CO(2) and NH(3) from urea (urease route): step 1/1. The polypeptide is Urease subunit gamma (Rhodopseudomonas palustris (strain BisA53)).